The sequence spans 178 residues: Transcription factor E (178 aa).

Residues 4–88 form the HTH TFE/IIEalpha-type domain; it reads AEDLFINLAK…YWKPNIDQIN (85 aa).

It belongs to the TFE family. In terms of assembly, monomer. Interaction with RNA polymerase subunits RpoF and RpoE is necessary for Tfe stimulatory transcription activity. Able to interact with Tbp and RNA polymerase in the absence of DNA promoter. Interacts both with the preinitiation and elongation complexes.

Transcription factor that plays a role in the activation of archaeal genes transcribed by RNA polymerase. Facilitates transcription initiation by enhancing TATA-box recognition by TATA-box-binding protein (Tbp), and transcription factor B (Tfb) and RNA polymerase recruitment. Not absolutely required for transcription in vitro, but particularly important in cases where Tbp or Tfb function is not optimal. It dynamically alters the nucleic acid-binding properties of RNA polymerases by stabilizing the initiation complex and destabilizing elongation complexes. Seems to translocate with the RNA polymerase following initiation and acts by binding to the non template strand of the transcription bubble in elongation complexes. The chain is Transcription factor E from Saccharolobus islandicus (strain L.S.2.15 / Lassen #1) (Sulfolobus islandicus).